Reading from the N-terminus, the 285-residue chain is Chemotaxis protein LafT (285 aa).

Helical transmembrane passes span 4–23, 34–51, 171–191, and 201–222; these read FLGV…WAGG, FLII…GNPP, ALPG…MQAI, and HVAA…GLDP. The Cytoplasmic segment spans residues 223–285; it reads LSNAMAQRVK…MEKWLAEQEG (63 aa).

This sequence belongs to the MotA family.

It localises to the cell inner membrane. In terms of biological role, required for rotation of the flagellar motor. Probable transmembrane proton channel. In Vibrio parahaemolyticus serotype O3:K6 (strain RIMD 2210633), this protein is Chemotaxis protein LafT (lafT).